The chain runs to 78 residues: Translational regulator CsrA (78 aa).

This sequence belongs to the CsrA/RsmA family. Homodimer; the beta-strands of each monomer intercalate to form a hydrophobic core, while the alpha-helices form wings that extend away from the core.

The protein resides in the cytoplasm. Its function is as follows. A translational regulator that binds mRNA to regulate translation initiation and/or mRNA stability. Usually binds in the 5'-UTR at or near the Shine-Dalgarno sequence preventing ribosome-binding, thus repressing translation. Its main target seems to be the major flagellin gene, while its function is anatagonized by FliW. The sequence is that of Translational regulator CsrA from Borrelia hermsii (strain HS1 / DAH).